Here is a 425-residue protein sequence, read N- to C-terminus: Serine--tRNA ligase (425 aa).

An L-serine-binding site is contributed by 231-233; the sequence is TAE. An ATP-binding site is contributed by 262-264; it reads RSE. E285 is an L-serine binding site. 349-352 provides a ligand contact to ATP; that stretch reads EISS. S385 is a binding site for L-serine.

The protein belongs to the class-II aminoacyl-tRNA synthetase family. Type-1 seryl-tRNA synthetase subfamily. In terms of assembly, homodimer. The tRNA molecule binds across the dimer.

Its subcellular location is the cytoplasm. The enzyme catalyses tRNA(Ser) + L-serine + ATP = L-seryl-tRNA(Ser) + AMP + diphosphate + H(+). It carries out the reaction tRNA(Sec) + L-serine + ATP = L-seryl-tRNA(Sec) + AMP + diphosphate + H(+). Its pathway is aminoacyl-tRNA biosynthesis; selenocysteinyl-tRNA(Sec) biosynthesis; L-seryl-tRNA(Sec) from L-serine and tRNA(Sec): step 1/1. Its function is as follows. Catalyzes the attachment of serine to tRNA(Ser). Is also able to aminoacylate tRNA(Sec) with serine, to form the misacylated tRNA L-seryl-tRNA(Sec), which will be further converted into selenocysteinyl-tRNA(Sec). The sequence is that of Serine--tRNA ligase from Maricaulis maris (strain MCS10) (Caulobacter maris).